A 332-amino-acid chain; its full sequence is Ketol-acid reductoisomerase (NADP(+)) (332 aa).

The 181-residue stretch at 5–185 (VKVYYDDEVS…GCTRAGVIET (181 aa)) folds into the KARI N-terminal Rossmann domain. NADP(+)-binding positions include 28–31 (YGNQ), Arg51, Ser56, and 86–89 (DLVQ). The active site involves His111. An NADP(+)-binding site is contributed by Gly137. Residues 186-331 (TFKDETESDL…RFIRKMSGLE (146 aa)) form the KARI C-terminal knotted domain. Mg(2+)-binding residues include Asp194, Glu198, Glu230, and Glu234. A substrate-binding site is contributed by Ser255.

The protein belongs to the ketol-acid reductoisomerase family. The cofactor is Mg(2+).

The enzyme catalyses (2R)-2,3-dihydroxy-3-methylbutanoate + NADP(+) = (2S)-2-acetolactate + NADPH + H(+). It catalyses the reaction (2R,3R)-2,3-dihydroxy-3-methylpentanoate + NADP(+) = (S)-2-ethyl-2-hydroxy-3-oxobutanoate + NADPH + H(+). It functions in the pathway amino-acid biosynthesis; L-isoleucine biosynthesis; L-isoleucine from 2-oxobutanoate: step 2/4. It participates in amino-acid biosynthesis; L-valine biosynthesis; L-valine from pyruvate: step 2/4. Involved in the biosynthesis of branched-chain amino acids (BCAA). Catalyzes an alkyl-migration followed by a ketol-acid reduction of (S)-2-acetolactate (S2AL) to yield (R)-2,3-dihydroxy-isovalerate. In the isomerase reaction, S2AL is rearranged via a Mg-dependent methyl migration to produce 3-hydroxy-3-methyl-2-ketobutyrate (HMKB). In the reductase reaction, this 2-ketoacid undergoes a metal-dependent reduction by NADPH to yield (R)-2,3-dihydroxy-isovalerate. This chain is Ketol-acid reductoisomerase (NADP(+)), found in Pyrococcus abyssi (strain GE5 / Orsay).